We begin with the raw amino-acid sequence, 1481 residues long: ABC-type transporter braE (1481 aa).

Transmembrane regions (helical) follow at residues 27-47, 86-106, 130-150, 159-179, 269-289, and 308-328; these read FTVK…FILA, LILI…SSAL, IFLS…ARTY, EIAF…MLLL, LYVP…SFFC, and PANI…VIAI. The ABC transmembrane type-1 1 domain occupies 281–549; the sequence is LAAIGSFFCQ…LLETLPQMAA (269 aa). A glycan (N-linked (GlcNAc...) asparagine) is linked at Asn-367. Transmembrane regions (helical) follow at residues 389–409, 410–430, and 491–511; these read ELWG…NLLG, VAFI…SFFM, and LMLT…PITF. The ABC transporter 1 domain occupies 594–823; sequence VAIKDGSFGW…QSYIHSLGVK (230 aa). An ATP-binding site is contributed by 627–634; it reads GPIASGKS. N-linked (GlcNAc...) asparagine glycans are attached at residues Asn-671 and Asn-813. 6 helical membrane passes run 887–907, 928–948, 1001–1021, 1026–1046, 1111–1131, and 1144–1164; these read IAIF…TIWL, AIYA…GVLL, SALL…AVIA, YLAI…KFYL, LHFV…SLAV, and LVTL…YTAL. The region spanning 887 to 1166 is the ABC transmembrane type-1 2 domain; the sequence is IAIFTSGLLY…VVIYYTALET (280 aa). N-linked (GlcNAc...) asparagine glycans are attached at residues Asn-1207 and Asn-1232. Positions 1224 to 1477 constitute an ABC transporter 2 domain; the sequence is LTTNELSSND…PGTRFGELWS (254 aa). 1260–1267 is a binding site for ATP; it reads GRTGSGKS. N-linked (GlcNAc...) asparagine glycosylation is found at Asn-1330 and Asn-1364.

Belongs to the ABC transporter superfamily. ABCC family. Conjugate transporter (TC 3.A.1.208) subfamily.

The protein localises to the membrane. In terms of biological role, ABC-type transporter; part of the gene cluster that mediates the biosynthesis of the brasilane terpene glycosides brasilane D and E. The sequence is that of ABC-type transporter braE from Annulohypoxylon truncatum (Hypoxylon truncatum).